Here is a 440-residue protein sequence, read N- to C-terminus: Gap junction gamma-2 protein (440 aa).

The Cytoplasmic portion of the chain corresponds to 1–21 (MTNMSWSFLTRLLEEIHNHST). A helical transmembrane segment spans residues 22 to 42 (FVGKVWLTVLVVFRIVLTAVG). Topologically, residues 43-78 (GESIYSDEQSKFTCNTRQPGCDNVCYDAFAPLSHVR) are extracellular. Residues 79–99 (FWVFQIVVISTPSVMYLGYAV) form a helical membrane-spanning segment. At 100–223 (HRLARASEQE…AQLVVRAAFE (124 aa)) the chain is on the cytoplasmic side. Residues 108–199 (QERRRALRRR…TPGPAGQHDG (92 aa)) form a disordered region. Residues 112–124 (RALRRRPGTRRLP) show a composition bias toward basic residues. Low complexity predominate over residues 136–149 (PDTTDLGEAEPILA). Residues 150–173 (LEEDEDEEPGAPEGPGEDTEEERA) are compositionally biased toward acidic residues. A helical transmembrane segment spans residues 224–244 (VAFLVGQYLLYGFEVPPFFAC). At 245–264 (SRQPCPHVVDCFVSRPTEKT) the chain is on the extracellular side. A helical membrane pass occupies residues 265-285 (VFLLVMYVVSCLCLLLNLCEM). The Cytoplasmic segment spans residues 286–440 (AHLGLGSAQD…SRDGKATVWI (155 aa)). Residues 369-440 (DRDSPPCAGL…SRDGKATVWI (72 aa)) form a disordered region. At S372 the chain carries Phosphoserine. Over residues 388–401 (VGGLASGTGSATSG) the composition is skewed to low complexity.

It belongs to the connexin family. Gamma-type subfamily. In terms of assembly, a connexon is composed of a hexamer of connexins. Interacts with TJP1. In terms of tissue distribution, mainly expressed by oligodendrocytes in the central nervous system (at protein level).

The protein resides in the cell membrane. The protein localises to the cell junction. Its subcellular location is the gap junction. In terms of biological role, one gap junction consists of a cluster of closely packed pairs of transmembrane channels, the connexons, through which materials of low MW diffuse from one cell to a neighboring cell. May play a role in myelination in central and peripheral nervous systems. The polypeptide is Gap junction gamma-2 protein (Gjc2) (Mus musculus (Mouse)).